A 354-amino-acid polypeptide reads, in one-letter code: Vascular endothelial growth factor D (354 aa).

The signal sequence occupies residues 1–21 (MYREWVVVNVFMMLYVQLVQG). The propeptide at 22 to 88 (SSNEHGPVKR…SRSASHRSTR (67 aa)) is or 99 (in a minor form). 3 disulfide bridges follow: Cys111–Cys153, Cys142–Cys189, and Cys146–Cys191. Residues Asn155 and Asn185 are each glycosylated (N-linked (GlcNAc...) asparagine). A propeptide spanning residues 206-354 (SIQIPEEDRC…AQGPHSRKNP (149 aa)) is cleaved from the precursor. Residues 222 to 237 (CPIDMLWDSNKCKCVL) form a 1; approximate repeat. Residues 222–318 (CPIDMLWDSN…PDTCSCEDRC (97 aa)) form a 4 X 16 AA repeats of C-X(10)-C-X-C-X(1,3)-C region. Tandem repeats lie at residues 258 to 273 (CGPHMMFDEDRCECVC), 277 to 293 (CPKDLIQHPKNCSCFEC), and 301 to 318 (CQKHKLFHPDTCSCEDRC). N-linked (GlcNAc...) asparagine glycosylation occurs at Asn287.

The protein belongs to the PDGF/VEGF growth factor family. As to quaternary structure, homodimer; non-covalent and antiparallel. Post-translationally, undergoes a complex proteolytic maturation which generates a variety of processed secreted forms with increased activity toward VEGFR-3 and VEGFR-2. VEGF-D first form an antiparallel homodimer linked by disulfide bonds before secretion. The fully processed VEGF-D is composed mostly of two VEGF homology domains (VHDs) bound by non-covalent interactions. Highly expressed in lung, heart, small intestine and fetal lung, and at lower levels in skeletal muscle, colon, and pancreas.

Its subcellular location is the secreted. Growth factor active in angiogenesis, lymphangiogenesis and endothelial cell growth, stimulating their proliferation and migration and also has effects on the permeability of blood vessels. May function in the formation of the venous and lymphatic vascular systems during embryogenesis, and also in the maintenance of differentiated lymphatic endothelium in adults. Binds and activates VEGFR-2 (KDR/FLK1) and VEGFR-3 (FLT4) receptors. The polypeptide is Vascular endothelial growth factor D (Homo sapiens (Human)).